The following is a 256-amino-acid chain: Small ribosomal subunit protein eS1 (256 aa).

The span at 1-18 shows a compositional bias: basic residues; it reads MAVGKNKRLSKGKKGLKK. Positions 1–20 are disordered; sequence MAVGKNKRLSKGKKGLKKRT. Ala2 bears the N-acetylalanine; partial mark.

Belongs to the eukaryotic ribosomal protein eS1 family. In terms of assembly, component of the small ribosomal subunit. Mature ribosomes consist of a small (40S) and a large (60S) subunit. The 40S subunit contains about 33 different proteins and 1 molecule of RNA (18S). The 60S subunit contains about 49 different proteins and 3 molecules of RNA (25S, 5.8S and 5S).

Its subcellular location is the cytoplasm. This Talaromyces marneffei (strain ATCC 18224 / CBS 334.59 / QM 7333) (Penicillium marneffei) protein is Small ribosomal subunit protein eS1 (rps1).